We begin with the raw amino-acid sequence, 561 residues long: FAD-binding monooxygenase tazF (561 aa).

Residues 74 to 77, 86 to 87, and tyrosine 92 contribute to the FAD site; these read TWLD and DI. Residue 84-86 coordinates NADP(+); that stretch reads GCD. NADP(+) contacts are provided by residues 212-218 and 235-236; these read NGSSALQ and RH.

This sequence belongs to the FAD-binding monooxygenase family. Requires FAD as cofactor.

Its pathway is secondary metabolite biosynthesis. Functionally, FAD-binding monooxygenase; part of the gene cluster that mediates the biosynthesis of azaterrilone A and other azaphilones, a class of fungal metabolites characterized by a highly oxygenated pyrano-quinone bicyclic core and exhibiting a broad range of bioactivities. The first step of the pathway begins with the non-reducing polyketide synthase tazA that assembles one acetyl-CoA starter unit, five malonyl-CoA units, and catalyzes a series of Claisen condensations, methylation, PT-mediated cyclization, and finally releases the first hexaketide precursor through the R-domain. The tazA product then undergoes reduction on its terminal ketone and the following pyran-ring formation by yet undetermined enzyme(s). Dehydration and enoyl reduction, possibly involving the trans-enoyl reductase tazE leads to the next intermediate. TazD is predicted as an acetyltransferase and might catalyze the acetylation steps leading to the synthesis of azaterrilone A. Azaterrilone A is not the final product of the taz pathway and both the highly reducing polyketide synthase tazB and the dual enzyme tazHJ catalyze late steps of the pathway, leading to the production of the 2 final stereoisomers that contain additional polyketide modification whose structures have still to be determined. In Aspergillus terreus (strain NIH 2624 / FGSC A1156), this protein is FAD-binding monooxygenase tazF.